We begin with the raw amino-acid sequence, 185 residues long: Ribosome-recycling factor (185 aa).

Belongs to the RRF family.

It localises to the cytoplasm. Functionally, responsible for the release of ribosomes from messenger RNA at the termination of protein biosynthesis. May increase the efficiency of translation by recycling ribosomes from one round of translation to another. The sequence is that of Ribosome-recycling factor from Trichlorobacter lovleyi (strain ATCC BAA-1151 / DSM 17278 / SZ) (Geobacter lovleyi).